The sequence spans 567 residues: Proline--tRNA ligase (567 aa).

This sequence belongs to the class-II aminoacyl-tRNA synthetase family. ProS type 1 subfamily. As to quaternary structure, homodimer.

The protein localises to the cytoplasm. It carries out the reaction tRNA(Pro) + L-proline + ATP = L-prolyl-tRNA(Pro) + AMP + diphosphate. Catalyzes the attachment of proline to tRNA(Pro) in a two-step reaction: proline is first activated by ATP to form Pro-AMP and then transferred to the acceptor end of tRNA(Pro). As ProRS can inadvertently accommodate and process non-cognate amino acids such as alanine and cysteine, to avoid such errors it has two additional distinct editing activities against alanine. One activity is designated as 'pretransfer' editing and involves the tRNA(Pro)-independent hydrolysis of activated Ala-AMP. The other activity is designated 'posttransfer' editing and involves deacylation of mischarged Ala-tRNA(Pro). The misacylated Cys-tRNA(Pro) is not edited by ProRS. This chain is Proline--tRNA ligase, found in Streptomyces griseus subsp. griseus (strain JCM 4626 / CBS 651.72 / NBRC 13350 / KCC S-0626 / ISP 5235).